Reading from the N-terminus, the 919-residue chain is Leucine--tRNA ligase (919 aa).

Residues Pro83–His93 carry the 'HIGH' region motif. A 'KMSKS' region motif is present at residues Lys670–Ser674. Residue Lys673 coordinates ATP.

This sequence belongs to the class-I aminoacyl-tRNA synthetase family.

The protein resides in the cytoplasm. The enzyme catalyses tRNA(Leu) + L-leucine + ATP = L-leucyl-tRNA(Leu) + AMP + diphosphate. The chain is Leucine--tRNA ligase from Psychrobacter cryohalolentis (strain ATCC BAA-1226 / DSM 17306 / VKM B-2378 / K5).